A 109-amino-acid polypeptide reads, in one-letter code: Staphostatin B (109 aa).

The segment at 97–101 (IGTSR) is binds to staphopain B.

Belongs to the protease inhibitor I57 (SspC) family. In terms of assembly, forms a stable non-covalent complex with prematurely activated/folded SspB.

The protein localises to the cytoplasm. Its function is as follows. Specifically inhibits the cysteine protease staphopain B (SspB) by blocking the active site of the enzyme. Probably required to protect cytoplasmic proteins from being degraded by prematurely activated/folded prostaphopain B. Also involved in growth capacity, viability and bacterial morphology. In Staphylococcus aureus (strain Mu50 / ATCC 700699), this protein is Staphostatin B (sspC).